Reading from the N-terminus, the 576-residue chain is CDPK-related kinase 1 (576 aa).

The tract at residues 1–39 is disordered; the sequence is MGICHGKPVEQQSKSLPVSGETNEAPTNSQPPAKSSGFP. The N-myristoyl glycine moiety is linked to residue glycine 2. Over residues 10–33 the composition is skewed to polar residues; sequence EQQSKSLPVSGETNEAPTNSQPPA. The Protein kinase domain occupies 123-385; sequence YEIDGEVGRG…AAQALCHPWL (263 aa). Residues 129–137 and lysine 155 each bind ATP; that span reads VGRGHFGYT. Aspartate 251 functions as the Proton acceptor in the catalytic mechanism. Serine 291 carries the post-translational modification Phosphoserine. Serine 333 bears the Phosphoserine; by CPK1 and CPK34 mark. The tract at residues 390 to 420 is autoinhibitory domain; that stretch reads ELKIPSDMIIYKLVKVYIMSTSLRKSALAAL. The calmodulin binding (CaMBD) stretch occupies residues 409–429; sequence STSLRKSALAALAKTLTVPQL. EF-hand domains are found at residues 427–463, 464–499, 500–539, and 542–571; these read PQLAYLREQFTLLGPSKNGYISMQNYKTAILKSSTDA, MKDSRVFDFVHMISCLQYKKLDFEEFCASALSVYQL, EAMETWEQHARRAYELFEKDGNRPIMIEELASELGLGPSV, and HVVLQDWIRHSDGKLSFLGFVRLLHGVSSR. 10 residues coordinate Ca(2+): serine 442, asparagine 444, tyrosine 446, lysine 483, glutamate 488, aspartate 519, asparagine 521, glutamate 528, aspartate 553, and lysine 555. Serine 557 carries the post-translational modification Phosphoserine.

Belongs to the protein kinase superfamily. Ser/Thr protein kinase family. CDPK subfamily. As to quaternary structure, binds calmodulin (CaM) in a calcium-dependent manner. Interacts with HSFA1A. In terms of processing, autophosphorylated.

The protein localises to the membrane. It catalyses the reaction L-seryl-[protein] + ATP = O-phospho-L-seryl-[protein] + ADP + H(+). The catalysed reaction is L-threonyl-[protein] + ATP = O-phospho-L-threonyl-[protein] + ADP + H(+). Its activity is regulated as follows. Activated by calcium and calmodulin. Autophosphorylation may play an important role in the regulation of the kinase activity. In terms of biological role, may play a role in signal transduction pathways that involve calcium as a second messenger. Serine/threonine kinase that phosphorylates histone H3. Confers thermotolerance; involved in the heat-shock-mediated calmodulin-dependent signal transduction leading to the activation of heat-shock transcription factors (HSFs); phosphorylates HSFA1A. The chain is CDPK-related kinase 1 (CRK1) from Arabidopsis thaliana (Mouse-ear cress).